The primary structure comprises 300 residues: Virginiamycin B lyase (300 aa).

H231 is a substrate binding site. E270 is a binding site for Mg(2+). H272 acts as the Proton acceptor in catalysis. E287 contributes to the Mg(2+) binding site.

Belongs to the Vgb family. Monomer. Mg(2+) serves as cofactor.

Inactivates the type B streptogramin antibiotics by linearizing the lactone ring at the ester linkage, generating a free phenylglycine carboxylate and converting the threonyl moiety into 2-amino-butenoic acid. This Saccharopolyspora erythraea (strain ATCC 11635 / DSM 40517 / JCM 4748 / NBRC 13426 / NCIMB 8594 / NRRL 2338) protein is Virginiamycin B lyase.